Here is a 1050-residue protein sequence, read N- to C-terminus: Valine--tRNA ligase (1050 aa).

The segment covering glutamate 37 to threonine 57 has biased composition (basic and acidic residues). The interval glutamate 37–arginine 72 is disordered. A 'HIGH' region motif is present at residues proline 127–histidine 137. Residues lysine 642–serine 646 carry the 'KMSKS' region motif. Residue lysine 645 coordinates ATP.

It belongs to the class-I aminoacyl-tRNA synthetase family.

It catalyses the reaction tRNA(Val) + L-valine + ATP = L-valyl-tRNA(Val) + AMP + diphosphate. This Caenorhabditis elegans protein is Valine--tRNA ligase.